Reading from the N-terminus, the 83-residue chain is Translation initiation factor IF-1 (83 aa).

The S1-like domain occupies 1 to 72 (MAKEESIEMQ…TRGRIVYREA (72 aa)).

This sequence belongs to the IF-1 family. Component of the 30S ribosomal translation pre-initiation complex which assembles on the 30S ribosome in the order IF-2 and IF-3, IF-1 and N-formylmethionyl-tRNA(fMet); mRNA recruitment can occur at any time during PIC assembly.

It is found in the cytoplasm. Its function is as follows. One of the essential components for the initiation of protein synthesis. Stabilizes the binding of IF-2 and IF-3 on the 30S subunit to which N-formylmethionyl-tRNA(fMet) subsequently binds. Helps modulate mRNA selection, yielding the 30S pre-initiation complex (PIC). Upon addition of the 50S ribosomal subunit IF-1, IF-2 and IF-3 are released leaving the mature 70S translation initiation complex. The sequence is that of Translation initiation factor IF-1 from Coxiella burnetii (strain Dugway 5J108-111).